The sequence spans 322 residues: Deoxyhypusine hydroxylase (322 aa).

Fe cation contacts are provided by H78, E79, H111, and E112. HEAT-like PBS-type repeat units lie at residues 109 to 135 (VRHE…CLKN), 203 to 229 (LRYR…GFND), 234 to 260 (FKHE…VLGR), and 267 to 293 (VRHE…YLND). 4 residues coordinate Fe cation: H236, E237, H269, and E270.

Belongs to the deoxyhypusine hydroxylase family. Requires Fe(2+) as cofactor.

Its subcellular location is the cytoplasm. The protein resides in the nucleus. The catalysed reaction is [eIF5A protein]-deoxyhypusine + AH2 + O2 = [eIF5A protein]-hypusine + A + H2O. It functions in the pathway protein modification; eIF5A hypusination. Catalyzes the hydroxylation of the N(6)-(4-aminobutyl)-L-lysine intermediate to form hypusine, an essential post-translational modification only found in mature eIF-5A factor. In Candida glabrata (strain ATCC 2001 / BCRC 20586 / JCM 3761 / NBRC 0622 / NRRL Y-65 / CBS 138) (Yeast), this protein is Deoxyhypusine hydroxylase.